Here is a 250-residue protein sequence, read N- to C-terminus: Ubiquinone/menaquinone biosynthesis C-methyltransferase UbiE (250 aa).

S-adenosyl-L-methionine-binding positions include T74, D94, 122-123 (DA), and S139.

The protein belongs to the class I-like SAM-binding methyltransferase superfamily. MenG/UbiE family.

It carries out the reaction a 2-demethylmenaquinol + S-adenosyl-L-methionine = a menaquinol + S-adenosyl-L-homocysteine + H(+). It catalyses the reaction a 2-methoxy-6-(all-trans-polyprenyl)benzene-1,4-diol + S-adenosyl-L-methionine = a 5-methoxy-2-methyl-3-(all-trans-polyprenyl)benzene-1,4-diol + S-adenosyl-L-homocysteine + H(+). It participates in quinol/quinone metabolism; menaquinone biosynthesis; menaquinol from 1,4-dihydroxy-2-naphthoate: step 2/2. The protein operates within cofactor biosynthesis; ubiquinone biosynthesis. Methyltransferase required for the conversion of demethylmenaquinol (DMKH2) to menaquinol (MKH2) and the conversion of 2-polyprenyl-6-methoxy-1,4-benzoquinol (DDMQH2) to 2-polyprenyl-3-methyl-6-methoxy-1,4-benzoquinol (DMQH2). This is Ubiquinone/menaquinone biosynthesis C-methyltransferase UbiE from Roseobacter denitrificans (strain ATCC 33942 / OCh 114) (Erythrobacter sp. (strain OCh 114)).